The primary structure comprises 276 residues: Glutamate racemase (276 aa).

Substrate-binding positions include 9 to 10 (DS) and 41 to 42 (YG). Cys72 serves as the catalytic Proton donor/acceptor. Position 73–74 (73–74 (NT)) interacts with substrate. Cys183 (proton donor/acceptor) is an active-site residue. Substrate is bound at residue 184 to 185 (TH).

Belongs to the aspartate/glutamate racemases family.

The catalysed reaction is L-glutamate = D-glutamate. It participates in cell wall biogenesis; peptidoglycan biosynthesis. Its function is as follows. Provides the (R)-glutamate required for cell wall biosynthesis. In Shouchella clausii (strain KSM-K16) (Alkalihalobacillus clausii), this protein is Glutamate racemase.